Consider the following 586-residue polypeptide: Eukaryotic translation initiation factor 3 subunit D (586 aa).

The interval 102 to 176 is disordered; that stretch reads SAKRTFGRGG…DKPQRTREPS (75 aa). Basic and acidic residues predominate over residues 162-174; that stretch reads GWKDYDKPQRTRE. Residues 301-315 form an RNA gate region; that stretch reads SLDLVTVNENAADAP. A disordered region spans residues 567–586; the sequence is EEEEEVAAEEQEAAEEEAEE.

The protein belongs to the eIF-3 subunit D family. In terms of assembly, component of the eukaryotic translation initiation factor 3 (eIF-3) complex.

The protein localises to the cytoplasm. MRNA cap-binding component of the eukaryotic translation initiation factor 3 (eIF-3) complex, which is involved in protein synthesis of a specialized repertoire of mRNAs and, together with other initiation factors, stimulates binding of mRNA and methionyl-tRNAi to the 40S ribosome. The eIF-3 complex specifically targets and initiates translation of a subset of mRNAs involved in cell proliferation. In the eIF-3 complex, eif3d specifically recognizes and binds the 7-methylguanosine cap of a subset of mRNAs. The polypeptide is Eukaryotic translation initiation factor 3 subunit D (Aspergillus niger (strain ATCC MYA-4892 / CBS 513.88 / FGSC A1513)).